The chain runs to 74 residues: Large ribosomal subunit protein uL29 (74 aa).

This sequence belongs to the universal ribosomal protein uL29 family.

The sequence is that of Large ribosomal subunit protein uL29 from Streptomyces avermitilis (strain ATCC 31267 / DSM 46492 / JCM 5070 / NBRC 14893 / NCIMB 12804 / NRRL 8165 / MA-4680).